Consider the following 231-residue polypeptide: Platelet-activating factor acetylhydrolase IB subunit alpha1 (231 aa).

An N-acetylserine modification is found at serine 2. Serine 2 is modified (phosphoserine). Catalysis depends on residues serine 47, aspartate 192, and histidine 195.

This sequence belongs to the 'GDSL' lipolytic enzyme family. Platelet-activating factor acetylhydrolase IB beta/gamma subunits subfamily. Forms a catalytic dimer which is either homodimer (alpha1/alpha1 homodimer) or heterodimer with PAFAH1B2 (alpha1/alpha2 heterodimer). Component of the cytosolic (PAF-AH (I)) heterotetrameric enzyme, which is composed of PAFAH1B1 (beta), PAFAH1B2 (alpha2) and PAFAH1B3 (alpha1) subunits. The catalytic activity of the enzyme resides in the alpha1 (PAFAH1B3) and alpha2 (PAFAH1B2) subunits, whereas the beta subunit (PAFAH1B1) has regulatory activity. Trimer formation is not essential for the catalytic activity. Interacts with VLDLR; this interaction may modulate the Reelin pathway.

The protein resides in the cytoplasm. The enzyme catalyses a 1-O-alkyl-2-acetyl-sn-glycero-3-phosphocholine + H2O = a 1-O-alkyl-sn-glycero-3-phosphocholine + acetate + H(+). It carries out the reaction 1-O-hexadecyl-2-acetyl-sn-glycero-3-phosphocholine + H2O = 1-O-hexadecyl-sn-glycero-3-phosphocholine + acetate + H(+). It catalyses the reaction 1-O-hexadecyl-2-acetyl-sn-glycero-3-phosphate + H2O = 1-O-hexadecyl-sn-glycero-3-phosphate + acetate + H(+). Its activity is regulated as follows. Beta subunit (PAFAH1B1) inhibits the acetylhydrolase activity of the alpha1/alpha1 catalytic homodimer. Functionally, alpha1 catalytic subunit of the cytosolic type I platelet-activating factor (PAF) acetylhydrolase (PAF-AH (I)) heterotetrameric enzyme that catalyzes the hydrolyze of the acetyl group at the sn-2 position of PAF and its analogs and modulates the action of PAF. The activity and substrate specificity of PAF-AH (I) are affected by its subunit composition. Both alpha1/alpha1 homodimer (PAFAH1B3/PAFAH1B3 homodimer) and alpha1/alpha2 heterodimer(PAFAH1B3/PAFAH1B2 heterodimer) hydrolyze 1-O-alkyl-2-acetyl-sn-glycero-3-phosphoric acid (AAGPA) more efficiently than PAF, but they have little hydrolytic activity towards 1-O-alkyl-2-acetyl-sn-glycero-3-phosphorylethanolamine (AAGPE). Plays an important role during the development of brain. In Pongo abelii (Sumatran orangutan), this protein is Platelet-activating factor acetylhydrolase IB subunit alpha1.